The primary structure comprises 439 residues: Proline--tRNA ligase (439 aa).

Belongs to the class-II aminoacyl-tRNA synthetase family. ProS type 2 subfamily. Homodimer.

It localises to the cytoplasm. It carries out the reaction tRNA(Pro) + L-proline + ATP = L-prolyl-tRNA(Pro) + AMP + diphosphate. In terms of biological role, catalyzes the attachment of proline to tRNA(Pro) in a two-step reaction: proline is first activated by ATP to form Pro-AMP and then transferred to the acceptor end of tRNA(Pro). The chain is Proline--tRNA ligase from Bradyrhizobium diazoefficiens (strain JCM 10833 / BCRC 13528 / IAM 13628 / NBRC 14792 / USDA 110).